A 208-amino-acid chain; its full sequence is Thymidylate kinase (208 aa).

Gly-11–Thr-18 is an ATP binding site.

It belongs to the thymidylate kinase family.

The catalysed reaction is dTMP + ATP = dTDP + ADP. Phosphorylation of dTMP to form dTDP in both de novo and salvage pathways of dTTP synthesis. The chain is Thymidylate kinase from Hahella chejuensis (strain KCTC 2396).